A 392-amino-acid polypeptide reads, in one-letter code: Branched-chain-amino-acid aminotransferase, mitochondrial (392 aa).

Residues 1–27 constitute a mitochondrion transit peptide; the sequence is MAAAALGQIWARKFLSVPWLLCGPRRY. Tyrosine 168 provides a ligand contact to substrate. Lysine 229 bears the N6-(pyridoxal phosphate)lysine mark. An N6-acetyllysine modification is found at lysine 321.

It belongs to the class-IV pyridoxal-phosphate-dependent aminotransferase family. In terms of assembly, homodimer. Requires pyridoxal 5'-phosphate as cofactor.

Its subcellular location is the mitochondrion. It carries out the reaction L-leucine + 2-oxoglutarate = 4-methyl-2-oxopentanoate + L-glutamate. The catalysed reaction is L-isoleucine + 2-oxoglutarate = (S)-3-methyl-2-oxopentanoate + L-glutamate. The enzyme catalyses L-valine + 2-oxoglutarate = 3-methyl-2-oxobutanoate + L-glutamate. Functionally, catalyzes the first reaction in the catabolism of the essential branched chain amino acids leucine, isoleucine, and valine. May also function as a transporter of branched chain alpha-keto acids. The sequence is that of Branched-chain-amino-acid aminotransferase, mitochondrial (BCAT2) from Pongo abelii (Sumatran orangutan).